We begin with the raw amino-acid sequence, 255 residues long: Triosephosphate isomerase (255 aa).

Asparagine 9 to lysine 11 contributes to the substrate binding site. Residue histidine 96 is the Electrophile of the active site. The active-site Proton acceptor is glutamate 170. Residues glycine 176, serine 216, and glycine 237–glycine 238 each bind substrate.

It belongs to the triosephosphate isomerase family. As to quaternary structure, homodimer.

It is found in the cytoplasm. The catalysed reaction is D-glyceraldehyde 3-phosphate = dihydroxyacetone phosphate. It participates in carbohydrate biosynthesis; gluconeogenesis. It functions in the pathway carbohydrate degradation; glycolysis; D-glyceraldehyde 3-phosphate from glycerone phosphate: step 1/1. Its function is as follows. Involved in the gluconeogenesis. Catalyzes stereospecifically the conversion of dihydroxyacetone phosphate (DHAP) to D-glyceraldehyde-3-phosphate (G3P). This Magnetococcus marinus (strain ATCC BAA-1437 / JCM 17883 / MC-1) protein is Triosephosphate isomerase.